A 461-amino-acid polypeptide reads, in one-letter code: Bifunctional protein HldE (461 aa).

The interval 1–311 is ribokinase; the sequence is MKKILVVGDL…EEIALILNQT (311 aa). Residue 191–194 coordinates ATP; it reads NRAE. Aspartate 260 is an active-site residue. The cytidylyltransferase stretch occupies residues 332 to 461; that stretch reads FTNGCFDLLH…IEKIKRTHND (130 aa).

This sequence in the N-terminal section; belongs to the carbohydrate kinase PfkB family. The protein in the C-terminal section; belongs to the cytidylyltransferase family. Homodimer.

The catalysed reaction is D-glycero-beta-D-manno-heptose 7-phosphate + ATP = D-glycero-beta-D-manno-heptose 1,7-bisphosphate + ADP + H(+). The enzyme catalyses D-glycero-beta-D-manno-heptose 1-phosphate + ATP + H(+) = ADP-D-glycero-beta-D-manno-heptose + diphosphate. Its pathway is nucleotide-sugar biosynthesis; ADP-L-glycero-beta-D-manno-heptose biosynthesis; ADP-L-glycero-beta-D-manno-heptose from D-glycero-beta-D-manno-heptose 7-phosphate: step 1/4. The protein operates within nucleotide-sugar biosynthesis; ADP-L-glycero-beta-D-manno-heptose biosynthesis; ADP-L-glycero-beta-D-manno-heptose from D-glycero-beta-D-manno-heptose 7-phosphate: step 3/4. Functionally, catalyzes the phosphorylation of D-glycero-D-manno-heptose 7-phosphate at the C-1 position to selectively form D-glycero-beta-D-manno-heptose-1,7-bisphosphate. Catalyzes the ADP transfer from ATP to D-glycero-beta-D-manno-heptose 1-phosphate, yielding ADP-D-glycero-beta-D-manno-heptose. The sequence is that of Bifunctional protein HldE from Helicobacter pylori (strain P12).